The chain runs to 102 residues: Small ribosomal subunit protein uS10 (102 aa).

It belongs to the universal ribosomal protein uS10 family. As to quaternary structure, part of the 30S ribosomal subunit.

Involved in the binding of tRNA to the ribosomes. This chain is Small ribosomal subunit protein uS10, found in Streptococcus pneumoniae (strain CGSP14).